Here is a 78-residue protein sequence, read N- to C-terminus: Large ribosomal subunit protein bL28 (78 aa).

The interval 1-22 is disordered; sequence MAKVCQVTGKRPVTGHNVSHAK.

This sequence belongs to the bacterial ribosomal protein bL28 family.

The chain is Large ribosomal subunit protein bL28 from Saccharophagus degradans (strain 2-40 / ATCC 43961 / DSM 17024).